The sequence spans 341 residues: Ketol-acid reductoisomerase (NADP(+)) (341 aa).

The 181-residue stretch at 2–182 (TDIVYDKDAD…GGLRAGGIRT (181 aa)) folds into the KARI N-terminal Rossmann domain. Residues 25-28 (YGSQ), K48, S51, S53, and 83-86 (DQHQ) each bind NADP(+). The active site involves H108. G134 is a binding site for NADP(+). One can recognise a KARI C-terminal knotted domain in the interval 183–328 (TFTEETETDL…RELRKLFAWN (146 aa)). Positions 191, 195, 227, and 231 each coordinate Mg(2+). S252 is a binding site for substrate.

The protein belongs to the ketol-acid reductoisomerase family. The cofactor is Mg(2+).

It catalyses the reaction (2R)-2,3-dihydroxy-3-methylbutanoate + NADP(+) = (2S)-2-acetolactate + NADPH + H(+). The enzyme catalyses (2R,3R)-2,3-dihydroxy-3-methylpentanoate + NADP(+) = (S)-2-ethyl-2-hydroxy-3-oxobutanoate + NADPH + H(+). It functions in the pathway amino-acid biosynthesis; L-isoleucine biosynthesis; L-isoleucine from 2-oxobutanoate: step 2/4. The protein operates within amino-acid biosynthesis; L-valine biosynthesis; L-valine from pyruvate: step 2/4. In terms of biological role, involved in the biosynthesis of branched-chain amino acids (BCAA). Catalyzes an alkyl-migration followed by a ketol-acid reduction of (S)-2-acetolactate (S2AL) to yield (R)-2,3-dihydroxy-isovalerate. In the isomerase reaction, S2AL is rearranged via a Mg-dependent methyl migration to produce 3-hydroxy-3-methyl-2-ketobutyrate (HMKB). In the reductase reaction, this 2-ketoacid undergoes a metal-dependent reduction by NADPH to yield (R)-2,3-dihydroxy-isovalerate. The protein is Ketol-acid reductoisomerase (NADP(+)) of Clavibacter sepedonicus (Clavibacter michiganensis subsp. sepedonicus).